Consider the following 393-residue polypeptide: NAD(P)H-quinone oxidoreductase subunit H, chloroplastic (393 aa).

Belongs to the complex I 49 kDa subunit family. NDH is composed of at least 16 different subunits, 5 of which are encoded in the nucleus.

It localises to the plastid. Its subcellular location is the chloroplast thylakoid membrane. It carries out the reaction a plastoquinone + NADH + (n+1) H(+)(in) = a plastoquinol + NAD(+) + n H(+)(out). It catalyses the reaction a plastoquinone + NADPH + (n+1) H(+)(in) = a plastoquinol + NADP(+) + n H(+)(out). Functionally, NDH shuttles electrons from NAD(P)H:plastoquinone, via FMN and iron-sulfur (Fe-S) centers, to quinones in the photosynthetic chain and possibly in a chloroplast respiratory chain. The immediate electron acceptor for the enzyme in this species is believed to be plastoquinone. Couples the redox reaction to proton translocation, and thus conserves the redox energy in a proton gradient. The protein is NAD(P)H-quinone oxidoreductase subunit H, chloroplastic of Brachypodium distachyon (Purple false brome).